The following is a 31-amino-acid chain: Cytochrome b6-f complex subunit 6 (31 aa).

The chain crosses the membrane as a helical span at residues 3–23; it reads TITSYFGFLLAVLTITSGLFI.

The protein belongs to the PetL family. In terms of assembly, the 4 large subunits of the cytochrome b6-f complex are cytochrome b6, subunit IV (17 kDa polypeptide, PetD), cytochrome f and the Rieske protein, while the 4 small subunits are PetG, PetL, PetM and PetN. The complex functions as a dimer.

The protein resides in the plastid. Its subcellular location is the chloroplast thylakoid membrane. In terms of biological role, component of the cytochrome b6-f complex, which mediates electron transfer between photosystem II (PSII) and photosystem I (PSI), cyclic electron flow around PSI, and state transitions. PetL is important for photoautotrophic growth as well as for electron transfer efficiency and stability of the cytochrome b6-f complex. This is Cytochrome b6-f complex subunit 6 from Lotus japonicus (Lotus corniculatus var. japonicus).